Reading from the N-terminus, the 348-residue chain is Methylthioribose-1-phosphate isomerase (348 aa).

Residues 53–55 (RGA), Arg-93, and Gln-197 each bind substrate. Asp-238 acts as the Proton donor in catalysis. 248–249 (NK) lines the substrate pocket.

It belongs to the eIF-2B alpha/beta/delta subunits family. MtnA subfamily.

It catalyses the reaction 5-(methylsulfanyl)-alpha-D-ribose 1-phosphate = 5-(methylsulfanyl)-D-ribulose 1-phosphate. It participates in amino-acid biosynthesis; L-methionine biosynthesis via salvage pathway; L-methionine from S-methyl-5-thio-alpha-D-ribose 1-phosphate: step 1/6. In terms of biological role, catalyzes the interconversion of methylthioribose-1-phosphate (MTR-1-P) into methylthioribulose-1-phosphate (MTRu-1-P). This Gloeobacter violaceus (strain ATCC 29082 / PCC 7421) protein is Methylthioribose-1-phosphate isomerase.